A 67-amino-acid chain; its full sequence is DNA-directed RNA polymerase subunit omega (67 aa).

This sequence belongs to the RNA polymerase subunit omega family. As to quaternary structure, the RNAP catalytic core consists of 2 alpha, 1 beta, 1 beta' and 1 omega subunit. When a sigma factor is associated with the core the holoenzyme is formed, which can initiate transcription.

The catalysed reaction is RNA(n) + a ribonucleoside 5'-triphosphate = RNA(n+1) + diphosphate. Functionally, promotes RNA polymerase assembly. Latches the N- and C-terminal regions of the beta' subunit thereby facilitating its interaction with the beta and alpha subunits. The protein is DNA-directed RNA polymerase subunit omega of Exiguobacterium sibiricum (strain DSM 17290 / CCUG 55495 / CIP 109462 / JCM 13490 / 255-15).